The following is a 430-amino-acid chain: Cysteate synthase (430 aa).

Lys106 is subject to N6-(pyridoxal phosphate)lysine. The pyridoxal 5'-phosphate site is built by Asn132 and Thr381.

This sequence belongs to the threonine synthase family. Cysteate synthase subfamily. Homotrimer. The cofactor is pyridoxal 5'-phosphate.

It catalyses the reaction O-phospho-L-serine + sulfite + H(+) = L-cysteate + phosphate. It functions in the pathway cofactor biosynthesis; coenzyme M biosynthesis. Functionally, specifically catalyzes the beta-elimination of phosphate from L-phosphoserine and the beta-addition of sulfite to the dehydroalanine intermediate to produce L-cysteate. The chain is Cysteate synthase from Methanoculleus marisnigri (strain ATCC 35101 / DSM 1498 / JR1).